We begin with the raw amino-acid sequence, 454 residues long: Protoheme IX farnesyltransferase 1 (454 aa).

A unknown region spans residues 1–186 (MRTTGFSGLL…AYFELTKPRL (186 aa)). 4 helical membrane passes run 9–29 (LLSA…TAAL), 59–79 (GVAA…WSET), 87–107 (LALA…VATG), and 113–133 (LHLF…AWHL). The tract at residues 137 to 164 (TGSDDAPESPPELAPPVDEEPAATEQPA) is disordered. The next 9 membrane-spanning stretches (helical) occupy residues 186 to 206 (LMWL…TPTV), 209 to 229 (VVFT…FNHV), 251 to 271 (VPVA…LWAF), 276 to 296 (LLAA…YTLI), 300 to 320 (NTVQ…LIGY), 321 to 341 (AAVT…IFLW), 377 to 397 (HIVF…AVTD), 398 to 418 (LGWL…WAVV), and 433 to 453 (FHAS…DSLA). Positions 187-451 (MWLLCLVAGA…LVLVAILIDS (265 aa)) are protoheme IX prenyltransferase.

In the C-terminal section; belongs to the UbiA prenyltransferase family. Protoheme IX farnesyltransferase subfamily.

The protein localises to the cell membrane. It carries out the reaction heme b + (2E,6E)-farnesyl diphosphate + H2O = Fe(II)-heme o + diphosphate. Its pathway is porphyrin-containing compound metabolism; heme O biosynthesis; heme O from protoheme: step 1/1. In terms of biological role, converts heme B (protoheme IX) to heme O by substitution of the vinyl group on carbon 2 of heme B porphyrin ring with a hydroxyethyl farnesyl side group. The polypeptide is Protoheme IX farnesyltransferase 1 (ctaB1) (Natronomonas pharaonis (strain ATCC 35678 / DSM 2160 / CIP 103997 / JCM 8858 / NBRC 14720 / NCIMB 2260 / Gabara) (Halobacterium pharaonis)).